Reading from the N-terminus, the 571-residue chain is Proline--tRNA ligase (571 aa).

The protein belongs to the class-II aminoacyl-tRNA synthetase family. ProS type 1 subfamily. Homodimer.

The protein localises to the cytoplasm. The catalysed reaction is tRNA(Pro) + L-proline + ATP = L-prolyl-tRNA(Pro) + AMP + diphosphate. In terms of biological role, catalyzes the attachment of proline to tRNA(Pro) in a two-step reaction: proline is first activated by ATP to form Pro-AMP and then transferred to the acceptor end of tRNA(Pro). As ProRS can inadvertently accommodate and process non-cognate amino acids such as alanine and cysteine, to avoid such errors it has two additional distinct editing activities against alanine. One activity is designated as 'pretransfer' editing and involves the tRNA(Pro)-independent hydrolysis of activated Ala-AMP. The other activity is designated 'posttransfer' editing and involves deacylation of mischarged Ala-tRNA(Pro). The misacylated Cys-tRNA(Pro) is not edited by ProRS. This is Proline--tRNA ligase from Pseudomonas entomophila (strain L48).